A 309-amino-acid polypeptide reads, in one-letter code: UPF0252 protein PH0672 (309 aa).

The next 2 membrane-spanning stretches (helical) occupy residues 5-25 (SVII…NESI) and 106-126 (AVLT…LMIF).

Belongs to the UPF0252 family.

Its subcellular location is the cell membrane. In Pyrococcus horikoshii (strain ATCC 700860 / DSM 12428 / JCM 9974 / NBRC 100139 / OT-3), this protein is UPF0252 protein PH0672.